We begin with the raw amino-acid sequence, 251 residues long: Hydroxyacylglutathione hydrolase (251 aa).

Zn(2+) is bound by residues His53, His55, Asp57, His58, His110, Asp127, and His165.

Belongs to the metallo-beta-lactamase superfamily. Glyoxalase II family. As to quaternary structure, monomer. Requires Zn(2+) as cofactor.

The catalysed reaction is an S-(2-hydroxyacyl)glutathione + H2O = a 2-hydroxy carboxylate + glutathione + H(+). It participates in secondary metabolite metabolism; methylglyoxal degradation; (R)-lactate from methylglyoxal: step 2/2. Its function is as follows. Thiolesterase that catalyzes the hydrolysis of S-D-lactoyl-glutathione to form glutathione and D-lactic acid. The chain is Hydroxyacylglutathione hydrolase from Cronobacter sakazakii (strain ATCC BAA-894) (Enterobacter sakazakii).